A 486-amino-acid polypeptide reads, in one-letter code: Glutamate--tRNA ligase (486 aa).

The 'HIGH' region motif lies at 11–21 (PSPTGLLHIGN). The 'KMSKS' region signature appears at 255-259 (KLSKR). ATP is bound at residue lysine 258.

It belongs to the class-I aminoacyl-tRNA synthetase family. Glutamate--tRNA ligase type 1 subfamily. In terms of assembly, monomer.

Its subcellular location is the cytoplasm. It catalyses the reaction tRNA(Glu) + L-glutamate + ATP = L-glutamyl-tRNA(Glu) + AMP + diphosphate. Functionally, catalyzes the attachment of glutamate to tRNA(Glu) in a two-step reaction: glutamate is first activated by ATP to form Glu-AMP and then transferred to the acceptor end of tRNA(Glu). The chain is Glutamate--tRNA ligase from Streptococcus pneumoniae (strain Hungary19A-6).